The sequence spans 239 residues: MARLGVNIDHVATIRQARGGAEPDPVAAAAIAELAGADGITIHLREDRRHIQDRDLRLLRQTIKTRLNLEMAATDEMVSIALSVKPDMCTLVPEKRQELTTEGGLDVRLHLDAIRGAVQKLQDGGLIVSLFIDPDTDQIKAADKSGADYIEIHTGAFAEASDWKAEQEELKKIENAIKLAGKLGLGVNAGHGLNYSNIRKVAALGGIEEYNIGHSIISKAVLVGLDRAVRDMVDLVKYS.

Asparagine 7 is a 3-amino-2-oxopropyl phosphate binding site. Residue 9–10 (DH) coordinates 1-deoxy-D-xylulose 5-phosphate. Arginine 18 contributes to the 3-amino-2-oxopropyl phosphate binding site. Residue histidine 43 is the Proton acceptor of the active site. Positions 45 and 50 each coordinate 1-deoxy-D-xylulose 5-phosphate. Catalysis depends on glutamate 70, which acts as the Proton acceptor. Residue threonine 100 participates in 1-deoxy-D-xylulose 5-phosphate binding. Histidine 191 (proton donor) is an active-site residue. 3-amino-2-oxopropyl phosphate contacts are provided by residues glycine 192 and 213-214 (GH).

It belongs to the PNP synthase family. As to quaternary structure, homooctamer; tetramer of dimers.

The protein localises to the cytoplasm. The enzyme catalyses 3-amino-2-oxopropyl phosphate + 1-deoxy-D-xylulose 5-phosphate = pyridoxine 5'-phosphate + phosphate + 2 H2O + H(+). It functions in the pathway cofactor biosynthesis; pyridoxine 5'-phosphate biosynthesis; pyridoxine 5'-phosphate from D-erythrose 4-phosphate: step 5/5. Functionally, catalyzes the complicated ring closure reaction between the two acyclic compounds 1-deoxy-D-xylulose-5-phosphate (DXP) and 3-amino-2-oxopropyl phosphate (1-amino-acetone-3-phosphate or AAP) to form pyridoxine 5'-phosphate (PNP) and inorganic phosphate. In Geotalea daltonii (strain DSM 22248 / JCM 15807 / FRC-32) (Geobacter daltonii), this protein is Pyridoxine 5'-phosphate synthase.